Consider the following 932-residue polypeptide: Glycine dehydrogenase (decarboxylating) (932 aa).

Lys685 is subject to N6-(pyridoxal phosphate)lysine.

Belongs to the GcvP family. The glycine cleavage system is composed of four proteins: P, T, L and H. Pyridoxal 5'-phosphate is required as a cofactor.

The catalysed reaction is N(6)-[(R)-lipoyl]-L-lysyl-[glycine-cleavage complex H protein] + glycine + H(+) = N(6)-[(R)-S(8)-aminomethyldihydrolipoyl]-L-lysyl-[glycine-cleavage complex H protein] + CO2. Functionally, the glycine cleavage system catalyzes the degradation of glycine. The P protein binds the alpha-amino group of glycine through its pyridoxal phosphate cofactor; CO(2) is released and the remaining methylamine moiety is then transferred to the lipoamide cofactor of the H protein. The polypeptide is Glycine dehydrogenase (decarboxylating) (Brucella melitensis biotype 1 (strain ATCC 23456 / CCUG 17765 / NCTC 10094 / 16M)).